The chain runs to 299 residues: Epimerase family protein SH2119 (299 aa).

This sequence belongs to the NAD(P)-dependent epimerase/dehydratase family. SDR39U1 subfamily.

This Staphylococcus haemolyticus (strain JCSC1435) protein is Epimerase family protein SH2119.